Consider the following 913-residue polypeptide: Calcium-activated chloride channel regulator 1 (913 aa).

An N-terminal signal peptide occupies residues 1 to 21 (MGPFKSSVFILILHLLEGALS). Residues 46 to 199 (DETLIQQIKD…GITGKIEVNK (154 aa)) are metalloprotease domain. Residue His-156 participates in Zn(2+) binding. The active site involves Glu-157. Positions 160 and 167 each coordinate Zn(2+). Residues 306–475 (IVCLVLDKSG…NGLIDAFGAL (170 aa)) form the VWFA domain. 8 N-linked (GlcNAc...) asparagine glycosylation sites follow: Asn-503, Asn-769, Asn-803, Asn-809, Asn-830, Asn-835, Asn-885, and Asn-889. The disordered stretch occupies residues 866–885 (PPQTPPETPSPDETSAPCPN).

The protein belongs to the CLCR family. In terms of processing, glycosylated. Post-translationally, the translation product is autoproteolytically cleaved by the metalloprotease domain in the endoplasmic reticulum into a N-terminal and a C-terminal products that remain physically associated with each other. The cleavage is necessary for calcium-activated chloride channel (CaCC) activation activity.

Its subcellular location is the secreted. The protein resides in the extracellular space. Its function is as follows. May be involved in mediating calcium-activated chloride conductance. May play critical roles in goblet cell metaplasia, mucus hypersecretion, cystic fibrosis and AHR. May be involved in the regulation of mucus production and/or secretion by goblet cells. Involved in the regulation of tissue inflammation in the innate immune response. May play a role as a tumor suppressor. Induces MUC5AC. This chain is Calcium-activated chloride channel regulator 1 (CLCA1), found in Macaca mulatta (Rhesus macaque).